Here is a 359-residue protein sequence, read N- to C-terminus: RuBisCO accumulation factor 1 (359 aa).

Residues 12–195 (LSPEETDALF…RQKIEQLLSD (184 aa)) form an N-terminal alpha-helix region. Residues 219–345 (PLLIPVAGSL…VLLVMRPKKI (127 aa)) form a C-terminal beta-sheet region.

The protein belongs to the RAF family. As to quaternary structure, homodimer. Forms an RbcL(8)-Raf1(8) complex. Forms complexes of many stoichiometries with RbcL with and without RbcS. RbcX and Raf1 can bind simultaneously to RbcL.

The protein resides in the cytoplasm. In terms of biological role, a major RuBisCO chaperone. Acts after GroEL-GroES chaperonin to fold and/or assemble the large subunit of RuBisCO (ccbL, rbcL). Cooperates with RbcX in RbcL folding, plays the major role in assembly of dimers into RbcL(8)-Raf1(8) intermediate complexes. RbcS replaces Raf1, leading to holoenzyme formation. Its function is as follows. Raf1 and RbcX are probably functionally redundant; it has been suggested they may cooperate. This is RuBisCO accumulation factor 1 from Picosynechococcus sp. (strain ATCC 27264 / PCC 7002 / PR-6) (Agmenellum quadruplicatum).